A 163-amino-acid chain; its full sequence is 2-C-methyl-D-erythritol 2,4-cyclodiphosphate synthase (163 aa).

A divalent metal cation is bound by residues aspartate 11 and histidine 13. 4-CDP-2-C-methyl-D-erythritol 2-phosphate-binding positions include 11 to 13 (DIH) and 37 to 38 (HS). A divalent metal cation is bound at residue histidine 45. 4-CDP-2-C-methyl-D-erythritol 2-phosphate is bound by residues 59–61 (DIG), 64–68 (FSDTD), 103–109 (AQVPKMA), and arginine 145.

It belongs to the IspF family. In terms of assembly, homotrimer. A divalent metal cation is required as a cofactor.

It carries out the reaction 4-CDP-2-C-methyl-D-erythritol 2-phosphate = 2-C-methyl-D-erythritol 2,4-cyclic diphosphate + CMP. The protein operates within isoprenoid biosynthesis; isopentenyl diphosphate biosynthesis via DXP pathway; isopentenyl diphosphate from 1-deoxy-D-xylulose 5-phosphate: step 4/6. Involved in the biosynthesis of isopentenyl diphosphate (IPP) and dimethylallyl diphosphate (DMAPP), two major building blocks of isoprenoid compounds. Catalyzes the conversion of 4-diphosphocytidyl-2-C-methyl-D-erythritol 2-phosphate (CDP-ME2P) to 2-C-methyl-D-erythritol 2,4-cyclodiphosphate (ME-CPP) with a corresponding release of cytidine 5-monophosphate (CMP). The chain is 2-C-methyl-D-erythritol 2,4-cyclodiphosphate synthase from Nitrosomonas europaea (strain ATCC 19718 / CIP 103999 / KCTC 2705 / NBRC 14298).